The chain runs to 117 residues: Chondroitin proteoglycan 7 (117 aa).

The first 19 residues, 1 to 19 (MQTITLLALLACIAVPIFA), serve as a signal peptide directing secretion. The interval 31–97 (VEASGEGSGE…SGENLSNGIV (67 aa)) is disordered. 2 stretches are compositionally biased toward low complexity: residues 32–41 (EASGEGSGES) and 48–57 (ESSGEGSGES). O-linked (Xyl...) (chondroitin sulfate) serine glycans are attached at residues Ser66, Ser70, Ser74, Ser84, and Ser88. Over residues 75–95 (GASDAVLESSGEGSGENLSNG) the composition is skewed to low complexity. An N-linked (GlcNAc...) asparagine glycan is attached at Asn91.

The polypeptide is Chondroitin proteoglycan 7 (cpg-7) (Caenorhabditis briggsae).